A 107-amino-acid chain; its full sequence is Wound-induced proteinase inhibitor 1 (107 aa).

Positions 1–23 are cleaved as a signal peptide; that stretch reads MESKFAHIIVFFLLATSFETLLA. Residues 24–36 constitute a propeptide that is removed on maturation; sequence RKESDGPEVIELQ.

This sequence belongs to the protease inhibitor I13 (potato type I serine protease inhibitor) family. Heterogeneous tetramers of similar chains.

Inhibits both chymotrypsin and trypsin. This is Wound-induced proteinase inhibitor 1 from Solanum tuberosum (Potato).